A 152-amino-acid polypeptide reads, in one-letter code: Large ribosomal subunit protein uL15 (152 aa).

The protein belongs to the universal ribosomal protein uL15 family. Part of the 50S ribosomal subunit.

Functionally, binds to the 23S rRNA. In Staphylothermus marinus (strain ATCC 43588 / DSM 3639 / JCM 9404 / F1), this protein is Large ribosomal subunit protein uL15.